A 349-amino-acid chain; its full sequence is N-acetyl-gamma-glutamyl-phosphate reductase (349 aa).

Residue Cys149 is part of the active site.

The protein belongs to the NAGSA dehydrogenase family. Type 1 subfamily.

The protein resides in the cytoplasm. It carries out the reaction N-acetyl-L-glutamate 5-semialdehyde + phosphate + NADP(+) = N-acetyl-L-glutamyl 5-phosphate + NADPH + H(+). It functions in the pathway amino-acid biosynthesis; L-arginine biosynthesis; N(2)-acetyl-L-ornithine from L-glutamate: step 3/4. Catalyzes the NADPH-dependent reduction of N-acetyl-5-glutamyl phosphate to yield N-acetyl-L-glutamate 5-semialdehyde. The protein is N-acetyl-gamma-glutamyl-phosphate reductase of Acinetobacter baumannii (strain SDF).